The sequence spans 608 residues: Mitogen-activated protein kinase kinase kinase 1 (608 aa).

The segment covering 1–13 (MDRILARMKKSTG) has biased composition (basic residues). The interval 1 to 20 (MDRILARMKKSTGRRGGDKN) is disordered. The segment at 1–325 (MDRILARMKK…VSNTSPIYPD (325 aa)) is regulatory region. The residue at position 62 (S62) is a Phosphoserine. The tract at residues 192 to 234 (MERTPTIVKSKGYLVPNNVVAVGVGVGGGIKGLRPPVLKPPPA) is binding with MPK4. 2 disordered regions span residues 228-247 (VLKPPPAMKRPPIDHRGSSW) and 256-287 (SETVKRPSSSSSSSEDGCDEEEGKEEEAEAEE). Residues 271–287 (DGCDEEEGKEEEAEAEE) show a composition bias toward acidic residues. The Protein kinase domain maps to 333-587 (WQKGQLLGRG…AAELLNHPFV (255 aa)). ATP-binding positions include 339–347 (LGRGSFGSV) and K361. The active-site Proton acceptor is the D456. S603 is modified (phosphoserine).

The protein belongs to the protein kinase superfamily. STE Ser/Thr protein kinase family. MAP kinase kinase kinase subfamily. Interacts with MKK1, MMK2 and MPK4. May form a ternary complex composed of MEKK1 and MKK1/MKK2 and MPK4. Interacts with RACK1A, RACK1B and RACK1C. Binds to CRLK1. Phosphorylated by CRLK1 in response to cold.

Its subcellular location is the cell membrane. The protein resides in the endosome. The catalysed reaction is L-seryl-[protein] + ATP = O-phospho-L-seryl-[protein] + ADP + H(+). It catalyses the reaction L-threonyl-[protein] + ATP = O-phospho-L-threonyl-[protein] + ADP + H(+). Activated by cold via CRLK1-mediated phosphorylation and leading to elevated kinase activity towards MKK2. In terms of biological role, the MEKK1, MKK1/MKK2 and MPK4 function in a signaling pathway that modulates the expression of genes responding to biotic and abiotic stresses and also plays an important role in pathogen defense by negatively regulating innate immunity. Involved in the innate immune MAP kinase signaling cascade (MEKK1, MKK4/MKK5 and MPK3/MPK6) downstream of bacterial flagellin receptor FLS2. May be involved in the cold and salinity stress-mediated MAP kinase signaling cascade (MEKK1, MKK1/MKK2 and MPK4/MPK6). Activates by phosphorylation the downstream MKK2, MKK4 and MKK5 in a calcium-dependent manner. The polypeptide is Mitogen-activated protein kinase kinase kinase 1 (MEKK1) (Arabidopsis thaliana (Mouse-ear cress)).